Reading from the N-terminus, the 125-residue chain is Aspartate 1-decarboxylase (125 aa).

Serine 25 (schiff-base intermediate with substrate; via pyruvic acid) is an active-site residue. Position 25 is a pyruvic acid (Ser) (serine 25). Position 57 (threonine 57) interacts with substrate. Residue tyrosine 58 is the Proton donor of the active site. Glycine 71 to alanine 73 provides a ligand contact to substrate.

It belongs to the PanD family. As to quaternary structure, heterooctamer of four alpha and four beta subunits. It depends on pyruvate as a cofactor. Is synthesized initially as an inactive proenzyme, which is activated by self-cleavage at a specific serine bond to produce a beta-subunit with a hydroxyl group at its C-terminus and an alpha-subunit with a pyruvoyl group at its N-terminus.

The protein localises to the cytoplasm. It catalyses the reaction L-aspartate + H(+) = beta-alanine + CO2. It participates in cofactor biosynthesis; (R)-pantothenate biosynthesis; beta-alanine from L-aspartate: step 1/1. Functionally, catalyzes the pyruvoyl-dependent decarboxylation of aspartate to produce beta-alanine. The sequence is that of Aspartate 1-decarboxylase from Hydrogenobaculum sp. (strain Y04AAS1).